The following is a 224-amino-acid chain: Large ribosomal subunit protein bL25 (224 aa).

It belongs to the bacterial ribosomal protein bL25 family. CTC subfamily. In terms of assembly, part of the 50S ribosomal subunit; part of the 5S rRNA/L5/L18/L25 subcomplex. Contacts the 5S rRNA. Binds to the 5S rRNA independently of L5 and L18.

In terms of biological role, this is one of the proteins that binds to the 5S RNA in the ribosome where it forms part of the central protuberance. This Psychrobacter arcticus (strain DSM 17307 / VKM B-2377 / 273-4) protein is Large ribosomal subunit protein bL25.